The chain runs to 85 residues: U4-theraphotoxin-Hhn1a (85 aa).

A signal peptide spans 1-22; it reads MKVTLIAILTCAAVLVLRTTAA. The propeptide occupies 23 to 48; sequence EELEAESQLMEVGMPDTELAAVDEER. 3 disulfide bridges follow: C52–C66, C56–C77, and C71–C82.

This sequence belongs to the neurotoxin 12 (Hwtx-2) family. 02 (Hwtx-2) subfamily. As to quaternary structure, monomer. Expressed by the venom gland.

It localises to the secreted. Its function is as follows. Neurotoxin active on both insects and mammals. In Cyriopagopus hainanus (Chinese bird spider), this protein is U4-theraphotoxin-Hhn1a.